We begin with the raw amino-acid sequence, 136 residues long: Large ribosomal subunit protein uL16 (136 aa).

Belongs to the universal ribosomal protein uL16 family. As to quaternary structure, part of the 50S ribosomal subunit.

Its function is as follows. Binds 23S rRNA and is also seen to make contacts with the A and possibly P site tRNAs. This is Large ribosomal subunit protein uL16 from Shewanella halifaxensis (strain HAW-EB4).